The chain runs to 223 residues: Ribonuclease HII (223 aa).

One can recognise an RNase H type-2 domain in the interval 32–223 (FHIAGVDEVG…LKGRFRDNMS (192 aa)). The a divalent metal cation site is built by D38, E39, and D130.

Belongs to the RNase HII family. Mn(2+) is required as a cofactor. Mg(2+) serves as cofactor.

It is found in the cytoplasm. The catalysed reaction is Endonucleolytic cleavage to 5'-phosphomonoester.. Functionally, endonuclease that specifically degrades the RNA of RNA-DNA hybrids. The polypeptide is Ribonuclease HII (Bartonella quintana (strain Toulouse) (Rochalimaea quintana)).